Consider the following 84-residue polypeptide: Envelope small membrane protein (84 aa).

The Virion surface segment spans residues 1–18; it reads MFMADAYLADTVWYVGQI. The chain crosses the membrane as a helical span at residues 19 to 39; that stretch reads IFIVAICLLVTIVVVAFLATF. The Intravirion portion of the chain corresponds to 40-80; it reads KLCIQLCGMCNTLVLSPSIYVFNRGRQFYEFYNDVKPPVLD.

It belongs to the betacoronaviruses E protein family. In terms of assembly, homopentamer. Interacts with membrane protein M in the budding compartment of the host cell, which is located between endoplasmic reticulum and the Golgi complex. Interacts with Nucleoprotein.

It is found in the host Golgi apparatus membrane. Its function is as follows. Plays a central role in virus morphogenesis and assembly. Acts as a viroporin and self-assembles in host membranes forming pentameric protein-lipid pores that allow ion transport. Also plays a role in the induction of apoptosis. This chain is Envelope small membrane protein, found in Human coronavirus OC43 (HCoV-OC43).